A 145-amino-acid chain; its full sequence is Large ribosomal subunit protein uL15 (145 aa).

The tract at residues 1–57 (MKLNDLSPAPGSRREKHRPGRGIGSGLGKTGGRGHKGQTSRSGGTIAPGFEGGQQPL) is disordered. Positions 21-31 (RGIGSGLGKTG) are enriched in gly residues.

The protein belongs to the universal ribosomal protein uL15 family. Part of the 50S ribosomal subunit.

Its function is as follows. Binds to the 23S rRNA. The protein is Large ribosomal subunit protein uL15 of Pseudomonas fluorescens (strain SBW25).